A 220-amino-acid polypeptide reads, in one-letter code: Chaperone protein TorD (220 aa).

Belongs to the TorD/DmsD family. TorD subfamily.

Its subcellular location is the cytoplasm. Functionally, involved in the biogenesis of TorA. Acts on TorA before the insertion of the molybdenum cofactor and, as a result, probably favors a conformation of the apoenzyme that is competent for acquiring the cofactor. This is Chaperone protein TorD from Vibrio cholerae serotype O1 (strain M66-2).